A 481-amino-acid chain; its full sequence is Alpha-L-arabinofuranosidase 43 (481 aa).

Positions 1 to 19 (MRFSVFTAAIAAAFSACCA) are cleaved as a signal peptide. N-linked (GlcNAc...) asparagine glycans are attached at residues Asn-158, Asn-176, and Asn-365.

The protein belongs to the glycosyl hydrolase 43 family.

Its subcellular location is the secreted. The enzyme catalyses Hydrolysis of terminal non-reducing alpha-L-arabinofuranoside residues in alpha-L-arabinosides.. With respect to regulation, activity is significantly inhibited by SDS and partially inhibited by Ag(+), Fe(3+) and beta-mercaptoethanol. In terms of biological role, alpha-L-arabinofuranosidase specific for the cleavage of alpha-1,3-linkage. Shows high activity against 4-nitrophenyl alpha-L-arabinofuranoside, debranched arabinan, and sugar beet arabinan. This Humicola insolens (Soft-rot fungus) protein is Alpha-L-arabinofuranosidase 43.